The chain runs to 580 residues: N(6)-adenosine-methyltransferase catalytic subunit METTL3 (580 aa).

The segment at 1-70 (MSDTWSSIQA…PKPSTTSVAP (70 aa)) is disordered. Serine 2 is subject to N-acetylserine; alternate. Serine 2 is subject to Phosphoserine; alternate. Basic and acidic residues predominate over residues 28 to 37 (QDSGHLDLRN). Phosphoserine is present on residues serine 43, serine 48, and serine 50. Over residues 55–67 (APTSSGPKPSTTS) the composition is skewed to low complexity. Glycyl lysine isopeptide (Lys-Gly) (interchain with G-Cter in SUMO1) cross-links involve residues lysine 177, lysine 211, lysine 212, and lysine 215. The interval 198–217 (LASSASEPAKEPAKKSRKHA) is disordered. A Nuclear localization signal motif is present at residues 210–215 (AKKSRK). 3 positions are modified to phosphoserine: serine 219, serine 243, and serine 350. S-adenosyl-L-methionine is bound by residues 377 to 378 (DI) and aspartate 395. The segment at 396–410 (PPWDIHMELPYGTLT) is gate loop 1. Interaction with METTL14 regions lie at residues 450–454 (ERVDE) and 464–480 (QRIIRTGRTGHWLNHGK). Positions 462 to 479 (QLQRIIRTGRTGHWLNHG) are interphase loop. Residues 465-478 (RIIRTGRTGHWLNH) are positively charged region required for RNA-binding. Residues 507 to 515 (VRSTSHKPD) form a gate loop 2 region. S-adenosyl-L-methionine-binding positions include lysine 513, 536–539 (RPHN), and 549–550 (NQ).

This sequence belongs to the MT-A70-like family. In terms of assembly, heterodimer; heterodimerizes with METTL14 to form an antiparallel heterodimer that constitutes an active methyltransferase. Component of the WMM complex, a N6-methyltransferase complex composed of a catalytic subcomplex, named MAC, and of an associated subcomplex, named MACOM. The MAC subcomplex is composed of METTL3 and METTL14. The MACOM subcomplex is composed of WTAP, ZC3H13, CBLL1/HAKAI, VIRMA, and, in some cases of RBM15 (RBM15 or RBM15B). Interacts with NCBP1/CBP80. Interacts with EIF4E. Interacts with EIF3B. Post-translationally, sumoylation inhibits the N6-adenosine-methyltransferase activity. Sumoylation does not affect subcellular location or interaction with METTL14. Desumoylated by SENP1. In terms of tissue distribution, present in both germ cells and somatic cells during testis development (at protein level).

It localises to the nucleus. It is found in the nucleus speckle. The protein resides in the cytoplasm. It carries out the reaction an adenosine in mRNA + S-adenosyl-L-methionine = an N(6)-methyladenosine in mRNA + S-adenosyl-L-homocysteine + H(+). Methyltransferase activity is regulated by miRNAs via a sequence pairing mechanism. Methyltransferase activity is inhibited by sumoylation. In terms of biological role, the METTL3-METTL14 heterodimer forms a N6-methyltransferase complex that methylates adenosine residues at the N(6) position of some RNAs and regulates various processes such as the circadian clock, differentiation of embryonic and hematopoietic stem cells, cortical neurogenesis, response to DNA damage, differentiation of T-cells and primary miRNA processing. In the heterodimer formed with METTL14, METTL3 constitutes the catalytic core. N6-methyladenosine (m6A), which takes place at the 5'-[AG]GAC-3' consensus sites of some mRNAs, plays a role in mRNA stability, processing, translation efficiency and editing. M6A acts as a key regulator of mRNA stability: methylation is completed upon the release of mRNA into the nucleoplasm and promotes mRNA destabilization and degradation. In embryonic stem cells (ESCs), m6A methylation of mRNAs encoding key naive pluripotency-promoting transcripts results in transcript destabilization, promoting differentiation of ESCs. M6A regulates the length of the circadian clock: acts as an early pace-setter in the circadian loop by putting mRNA production on a fast-track for facilitating nuclear processing, thereby providing an early point of control in setting the dynamics of the feedback loop. M6A also regulates circadian regulation of hepatic lipid metabolism. M6A regulates spermatogonial differentiation and meiosis and is essential for male fertility and spermatogenesis. Also required for oogenesis. Involved in the response to DNA damage: in response to ultraviolet irradiation, METTL3 rapidly catalyzes the formation of m6A on poly(A) transcripts at DNA damage sites, leading to the recruitment of POLK to DNA damage sites. M6A is also required for T-cell homeostasis and differentiation: m6A methylation of transcripts of SOCS family members (SOCS1, SOCS3 and CISH) in naive T-cells promotes mRNA destabilization and degradation, promoting T-cell differentiation. Inhibits the type I interferon response by mediating m6A methylation of IFNB. M6A also regulates cortical neurogenesis: m6A methylation of transcripts related to transcription factors, neural stem cells, the cell cycle and neuronal differentiation during brain development promotes their destabilization and decay, promoting differentiation of radial glial cells. M6A also takes place in other RNA molecules, such as primary miRNA (pri-miRNAs). Mediates m6A methylation of Xist RNA, thereby participating in random X inactivation: m6A methylation of Xist leads to target YTHDC1 reader on Xist and promote transcription repression activity of Xist. METTL3 mediates methylation of pri-miRNAs, marking them for recognition and processing by DGCR8. Acts as a positive regulator of mRNA translation independently of the methyltransferase activity: promotes translation by interacting with the translation initiation machinery in the cytoplasm. The chain is N(6)-adenosine-methyltransferase catalytic subunit METTL3 from Mus musculus (Mouse).